Consider the following 439-residue polypeptide: Glucose-1-phosphate adenylyltransferase (439 aa).

Alpha-D-glucose 1-phosphate-binding positions include glycine 172, 187–188, and serine 219; that span reads EK.

The protein belongs to the bacterial/plant glucose-1-phosphate adenylyltransferase family. In terms of assembly, homotetramer.

It carries out the reaction alpha-D-glucose 1-phosphate + ATP + H(+) = ADP-alpha-D-glucose + diphosphate. Its pathway is glycan biosynthesis; glycogen biosynthesis. In terms of biological role, involved in the biosynthesis of ADP-glucose, a building block required for the elongation reactions to produce glycogen. Catalyzes the reaction between ATP and alpha-D-glucose 1-phosphate (G1P) to produce pyrophosphate and ADP-Glc. This chain is Glucose-1-phosphate adenylyltransferase, found in Synechocystis sp. (strain ATCC 27184 / PCC 6803 / Kazusa).